Here is a 255-residue protein sequence, read N- to C-terminus: ATP synthase subunit b 1 (255 aa).

A helical transmembrane segment spans residues 5–22 (WITVAAQIVNFLLLIWLL).

This sequence belongs to the ATPase B chain family. As to quaternary structure, F-type ATPases have 2 components, F(1) - the catalytic core - and F(0) - the membrane proton channel. F(1) has five subunits: alpha(3), beta(3), gamma(1), delta(1), epsilon(1). F(0) has three main subunits: a(1), b(2) and c(10-14). The alpha and beta chains form an alternating ring which encloses part of the gamma chain. F(1) is attached to F(0) by a central stalk formed by the gamma and epsilon chains, while a peripheral stalk is formed by the delta and b chains.

It localises to the cell inner membrane. Its function is as follows. F(1)F(0) ATP synthase produces ATP from ADP in the presence of a proton or sodium gradient. F-type ATPases consist of two structural domains, F(1) containing the extramembraneous catalytic core and F(0) containing the membrane proton channel, linked together by a central stalk and a peripheral stalk. During catalysis, ATP synthesis in the catalytic domain of F(1) is coupled via a rotary mechanism of the central stalk subunits to proton translocation. In terms of biological role, component of the F(0) channel, it forms part of the peripheral stalk, linking F(1) to F(0). In Dinoroseobacter shibae (strain DSM 16493 / NCIMB 14021 / DFL 12), this protein is ATP synthase subunit b 1.